A 1402-amino-acid polypeptide reads, in one-letter code: DNA-directed RNA polymerase subunit beta' (1402 aa).

Zn(2+)-binding residues include Cys-71, Cys-73, Cys-86, and Cys-89. Asp-462, Asp-464, and Asp-466 together coordinate Mg(2+). Zn(2+) contacts are provided by Cys-811, Cys-885, Cys-892, and Cys-895. Positions 1379-1402 (RKGTGAGSANQMLQDMTDQVPAAE) are disordered. Positions 1385 to 1395 (GSANQMLQDMT) are enriched in polar residues.

It belongs to the RNA polymerase beta' chain family. The RNAP catalytic core consists of 2 alpha, 1 beta, 1 beta' and 1 omega subunit. When a sigma factor is associated with the core the holoenzyme is formed, which can initiate transcription. Mg(2+) is required as a cofactor. The cofactor is Zn(2+).

It carries out the reaction RNA(n) + a ribonucleoside 5'-triphosphate = RNA(n+1) + diphosphate. In terms of biological role, DNA-dependent RNA polymerase catalyzes the transcription of DNA into RNA using the four ribonucleoside triphosphates as substrates. The protein is DNA-directed RNA polymerase subunit beta' of Agrobacterium fabrum (strain C58 / ATCC 33970) (Agrobacterium tumefaciens (strain C58)).